The sequence spans 153 residues: Mitochondrial fission 1 protein (153 aa).

The Cytoplasmic portion of the chain corresponds to 1–124; that stretch reads MTQLPYAVDA…LIDDKVTKEG (124 aa). Residues 73-106 form a TPR repeat; that stretch reads RECLYYLALGNYKLGNYAQARKYNDALLENEPAN. A helical transmembrane segment spans residues 125-145; it reads LMGVAIISGVAVAAGVIGGVL. The Mitochondrial intermembrane portion of the chain corresponds to 146–153; the sequence is LRNLGRKR.

This sequence belongs to the FIS1 family.

The protein resides in the mitochondrion outer membrane. Its function is as follows. Has a role in mitochondrial fission. Has a role in outer membrane fission but not matrix separation. In Neurospora crassa (strain ATCC 24698 / 74-OR23-1A / CBS 708.71 / DSM 1257 / FGSC 987), this protein is Mitochondrial fission 1 protein (mtp-2).